Here is a 353-residue protein sequence, read N- to C-terminus: Photosystem II protein D1 (353 aa).

Residue Thr-2 is modified to N-acetylthreonine. A Phosphothreonine modification is found at Thr-2. Transmembrane regions (helical) follow at residues 29–46 (YIGWFGVLMIPTLLTATS), 118–133 (HFLLGVACYMGREWEL), and 142–156 (WIAVAYSAPVAAATA). A chlorophyll a-binding site is contributed by His-118. Tyr-126 is a binding site for pheophytin a. Asp-170 and Glu-189 together coordinate [CaMn4O5] cluster. Residues 197–218 (FHMLGVAGVFGGSLFSAMHGSL) form a helical membrane-spanning segment. Residue His-198 coordinates chlorophyll a. A quinone contacts are provided by residues His-215 and 264–265 (SF). Fe cation is bound at residue His-215. Residue His-272 participates in Fe cation binding. Residues 274 to 288 (FLAAWPVVGIWFTAL) traverse the membrane as a helical segment. Residues His-332, Glu-333, Asp-342, and Ala-344 each contribute to the [CaMn4O5] cluster site. A propeptide spanning residues 345–353 (AVEAPSTIG) is cleaved from the precursor.

The protein belongs to the reaction center PufL/M/PsbA/D family. In terms of assembly, PSII is composed of 1 copy each of membrane proteins PsbA, PsbB, PsbC, PsbD, PsbE, PsbF, PsbH, PsbI, PsbJ, PsbK, PsbL, PsbM, PsbT, PsbX, PsbY, PsbZ, Psb30/Ycf12, at least 3 peripheral proteins of the oxygen-evolving complex and a large number of cofactors. It forms dimeric complexes. Requires The D1/D2 heterodimer binds P680, chlorophylls that are the primary electron donor of PSII, and subsequent electron acceptors. It shares a non-heme iron and each subunit binds pheophytin, quinone, additional chlorophylls, carotenoids and lipids. D1 provides most of the ligands for the Mn4-Ca-O5 cluster of the oxygen-evolving complex (OEC). There is also a Cl(-1) ion associated with D1 and D2, which is required for oxygen evolution. The PSII complex binds additional chlorophylls, carotenoids and specific lipids. as cofactor. In terms of processing, tyr-161 forms a radical intermediate that is referred to as redox-active TyrZ, YZ or Y-Z. Post-translationally, C-terminally processed by CTPA; processing is essential to allow assembly of the oxygen-evolving complex and thus photosynthetic growth.

The protein resides in the plastid. It localises to the chloroplast thylakoid membrane. The catalysed reaction is 2 a plastoquinone + 4 hnu + 2 H2O = 2 a plastoquinol + O2. Its function is as follows. Photosystem II (PSII) is a light-driven water:plastoquinone oxidoreductase that uses light energy to abstract electrons from H(2)O, generating O(2) and a proton gradient subsequently used for ATP formation. It consists of a core antenna complex that captures photons, and an electron transfer chain that converts photonic excitation into a charge separation. The D1/D2 (PsbA/PsbD) reaction center heterodimer binds P680, the primary electron donor of PSII as well as several subsequent electron acceptors. The sequence is that of Photosystem II protein D1 from Lemna minor (Common duckweed).